Consider the following 165-residue polypeptide: UPF0254 protein MmarC5_0742 (165 aa).

This sequence belongs to the UPF0254 family.

The protein is UPF0254 protein MmarC5_0742 of Methanococcus maripaludis (strain C5 / ATCC BAA-1333).